The following is a 904-amino-acid chain: Toll-like receptor 3 (904 aa).

Positions 1–26 (MSRPLPYHIYFFTGLLTCWILCTSSA) are cleaved as a signal peptide. The 26-residue stretch at 27–52 (HKCTVRHEVADCSHLKLTQIPEDLPT) folds into the LRRNT domain. At 27 to 705 (HKCTVRHEVA…PCKDSAPFEL (679 aa)) the chain is on the lumenal side. Cysteine 29 and cysteine 38 are joined by a disulfide. N-linked (GlcNAc...) asparagine glycosylation is found at asparagine 53, asparagine 58, and asparagine 71. LRR repeat units follow at residues 53–74 (NITVLNLTHNQLRRLPPANFTR), 77–98 (RLTILDGGFNSISKLEPELCQN), 101–122 (WLEILNLQHNEISQLSDKTFVF), 125–146 (NLTELHLMSNSIQKIQNDPFKN), 149–170 (NLIKLDLSHNGLSSTKLGTQLQ), and 173–196 (NLQELLLSNNKISSLTPEELDFLG). Residues cysteine 96 and cysteine 123 are joined by a disulfide bond. Asparagine 125 is a glycosylation site (N-linked (GlcNAc...) asparagine). Residue asparagine 197 is glycosylated (N-linked (GlcNAc...) asparagine). LRR repeat units lie at residues 199-220 (SLERLELSSNQIKEFSPGCFHA) and 223-245 (KLSGLSLNNAKLSPSLTEKLCLE). N-linked (GlcNAc...) asparagine glycans are attached at residues asparagine 248, asparagine 253, asparagine 276, and asparagine 292. LRR repeat units lie at residues 250–271 (SIENLSLSSNQLDTISHTTFSG), 276–297 (NLTTLDLSRSSLRVMDNDSFAW), 300–321 (HLEYLSLEYNNIEHLSSRSFYG), 324–345 (NLRHLNLRWSFTRQSISLTSLP), 357–378 (CLEYLNMEDNNFPSIKRNTFTG), 381–401 (RLKFLSLSNSFSSLRTLTNET), 409–430 (PLLLLNLTKNKISKIQSGAFSW), 433–455 (HLEVLDLGLNEIGQELTGQEWRG), 466–487 (YNKYLELTTNSFTSVPSLQRLM), 508–529 (NLVILDLSNNNIANVNDELLKG), 532–553 (KLEILDLQHNNLARLWKHANPG), 564–585 (HLRILNLGSNGFDEIPVEAFKD), 588–609 (ELKSIDLGMNNLNILPQSVFDN), and 612–633 (SLKSLSLQKNLITSVQKTVFGP). N-linked (GlcNAc...) asparagine glycosylation is found at asparagine 399 and asparagine 414. N-linked (GlcNAc...) asparagine glycosylation is found at asparagine 637, asparagine 663, and asparagine 668. In terms of domain architecture, LRRCT spans 646 to 699 (NPFDCTCESIAWFVNWINSTHTNISELSNHYLCNTPPQYHGFPVMLFDVSPCKD). 2 disulfide bridges follow: cysteine 650–cysteine 678 and cysteine 652–cysteine 697. Residues 706-726 (LFMINTNILLIFIFIVLLIHF) traverse the membrane as a helical segment. The Cytoplasmic segment spans residues 727 to 904 (EGWRISFYWN…VALGSRNSAH (178 aa)). Residues 754–897 (FEYAAYIIHA…AFHHKLKVAL (144 aa)) form the TIR domain. Tyrosine 759 is modified (phosphotyrosine). Glycyl lysine isopeptide (Lys-Gly) (interchain with G-Cter in ubiquitin) cross-links involve residues lysine 812 and lysine 831. Tyrosine 858 is subject to Phosphotyrosine.

Belongs to the Toll-like receptor family. Monomer and homodimer; dimerization is triggered by ligand-binding and is required for TLR3 signaling. Interacts (via transmembrane domain) with UNC93B1. Interacts with TICAM1 (via the TIR domain) in response to poly(I:C) and this interaction is enhanced the presence of WDFY1. Interacts with SRC; upon binding of double-stranded RNA. The tyrosine-phosphorylated form (via TIR domain) interacts with WDFY1 (via WD repeat 2) in response to poly(I:C). Post-translationally, ubiquitinated by TRIM3; leading to recognition and sorting of polyubiquitinated TLR3 by the ESCRT complexes. Ubiquitinated by ZNRF1 via 'Lys-63'-linked ubiquitin chains; leading to TLR3 lysosomal trafficking and degradation.

Its subcellular location is the endoplasmic reticulum membrane. It is found in the endosome membrane. The protein resides in the early endosome. Key component of innate and adaptive immunity. TLRs (Toll-like receptors) control host immune response against pathogens through recognition of molecular patterns specific to microorganisms. TLR3 is a nucleotide-sensing TLR which is activated by double-stranded RNA, a sign of viral infection. Acts via the adapter TRIF/TICAM1, leading to NF-kappa-B activation, cytokine secretion and the inflammatory response. The sequence is that of Toll-like receptor 3 (TLR3) from Boselaphus tragocamelus (Nilgai).